Here is a 150-residue protein sequence, read N- to C-terminus: Large ribosomal subunit protein bL9 (150 aa).

It belongs to the bacterial ribosomal protein bL9 family.

Functionally, binds to the 23S rRNA. The sequence is that of Large ribosomal subunit protein bL9 from Shewanella halifaxensis (strain HAW-EB4).